Here is a 92-residue protein sequence, read N- to C-terminus: DNA-directed RNA polymerase subunit omega (92 aa).

Belongs to the RNA polymerase subunit omega family. In terms of assembly, the RNAP catalytic core consists of 2 alpha, 1 beta, 1 beta' and 1 omega subunit. When a sigma factor is associated with the core the holoenzyme is formed, which can initiate transcription.

It carries out the reaction RNA(n) + a ribonucleoside 5'-triphosphate = RNA(n+1) + diphosphate. Its function is as follows. Promotes RNA polymerase assembly. Latches the N- and C-terminal regions of the beta' subunit thereby facilitating its interaction with the beta and alpha subunits. The sequence is that of DNA-directed RNA polymerase subunit omega from Shewanella sp. (strain ANA-3).